The primary structure comprises 233 residues: Favin (233 aa).

Mn(2+)-binding residues include Glu-120 and Asp-122. The Ca(2+) site is built by Asp-122, Phe-124, Asn-126, and Asp-130. Mn(2+) contacts are provided by Asp-130 and His-137. An N-linked (GlcNAc...) asparagine glycan is attached at Asn-168.

Belongs to the leguminous lectin family. In terms of assembly, heterodimer of an alpha and a beta chain.

The chain is Favin from Vicia faba (Broad bean).